We begin with the raw amino-acid sequence, 466 residues long: Cysteine--tRNA ligase (466 aa).

Cys-29 serves as a coordination point for Zn(2+). Residues 31-41 (PTVYNYIHIGN) carry the 'HIGH' region motif. Zn(2+) contacts are provided by Cys-209, His-234, and Glu-238. Residues 266–270 (KMSKS) carry the 'KMSKS' region motif. Lys-269 contacts ATP. Position 270 is a phosphoserine (Ser-270).

This sequence belongs to the class-I aminoacyl-tRNA synthetase family. Monomer. Zn(2+) serves as cofactor.

The protein resides in the cytoplasm. The catalysed reaction is tRNA(Cys) + L-cysteine + ATP = L-cysteinyl-tRNA(Cys) + AMP + diphosphate. The protein is Cysteine--tRNA ligase of Bacillus pumilus (strain SAFR-032).